The chain runs to 393 residues: MELGKSMENQTDVMVLLAKHVIPTVANGSNLVFSPMSINVLLCLIAAGSNCVTKEQILSFIMLPSSDYLNAVLAKTVSVALNDGMERSDLHLSTAYGVWIDKSLSFKPSFKDLLENSYNATCNQVDFATKPAEVINEVNAWAEVHTNGLIKEILSDDSIKTIRESMLILANAVYFKGAWSKKFDAKLTKSYDFHLLDGTMVKVPFMTNYKKQYLEYYDGFKVLRLPYVEDQRQFAMYIYLPNDRDGLPTLLEEISSKPRFLDNHIPRQRILTEAFKIPKFKFSFEFKASDVLKEMGLTLPFTHGSLTEMVESPSIPENLCVAENLFVSNVFHKACIEVDEEGTEAAAVSVASMTKDMLLMGDFVADHPFLFTVREEKSGVILFMGQVLDPSIH.

The tract at residues 342–366 (GTEAAAVSVASMTKDMLLMGDFVAD) is RCL.

This sequence belongs to the serpin family.

Functionally, probable serine protease inhibitor. The sequence is that of Serpin-Z4 from Arabidopsis thaliana (Mouse-ear cress).